The primary structure comprises 128 residues: uncharacterized protein (128 aa).

This is an uncharacterized protein from Methanocaldococcus jannaschii (strain ATCC 43067 / DSM 2661 / JAL-1 / JCM 10045 / NBRC 100440) (Methanococcus jannaschii).